A 209-amino-acid polypeptide reads, in one-letter code: Imidazole glycerol phosphate synthase subunit HisH (209 aa).

Residues 1–205 form the Glutamine amidotransferase type-1 domain; that stretch reads MIAIIDYGMG…KGVVETWKSS (205 aa). The active-site Nucleophile is C79. Residues H180 and E182 contribute to the active site.

As to quaternary structure, heterodimer of HisH and HisF.

The protein resides in the cytoplasm. The enzyme catalyses 5-[(5-phospho-1-deoxy-D-ribulos-1-ylimino)methylamino]-1-(5-phospho-beta-D-ribosyl)imidazole-4-carboxamide + L-glutamine = D-erythro-1-(imidazol-4-yl)glycerol 3-phosphate + 5-amino-1-(5-phospho-beta-D-ribosyl)imidazole-4-carboxamide + L-glutamate + H(+). The catalysed reaction is L-glutamine + H2O = L-glutamate + NH4(+). It functions in the pathway amino-acid biosynthesis; L-histidine biosynthesis; L-histidine from 5-phospho-alpha-D-ribose 1-diphosphate: step 5/9. Functionally, IGPS catalyzes the conversion of PRFAR and glutamine to IGP, AICAR and glutamate. The HisH subunit catalyzes the hydrolysis of glutamine to glutamate and ammonia as part of the synthesis of IGP and AICAR. The resulting ammonia molecule is channeled to the active site of HisF. The protein is Imidazole glycerol phosphate synthase subunit HisH of Bacillus cereus (strain AH187).